The chain runs to 329 residues: 4-diphosphocytidyl-2-C-methyl-D-erythritol kinase (329 aa).

Lys-14 is an active-site residue. 117-127 (PSGAGMGGASS) lines the ATP pocket. Asp-166 is a catalytic residue.

This sequence belongs to the GHMP kinase family. IspE subfamily.

It carries out the reaction 4-CDP-2-C-methyl-D-erythritol + ATP = 4-CDP-2-C-methyl-D-erythritol 2-phosphate + ADP + H(+). Its pathway is isoprenoid biosynthesis; isopentenyl diphosphate biosynthesis via DXP pathway; isopentenyl diphosphate from 1-deoxy-D-xylulose 5-phosphate: step 3/6. Catalyzes the phosphorylation of the position 2 hydroxy group of 4-diphosphocytidyl-2C-methyl-D-erythritol. The sequence is that of 4-diphosphocytidyl-2-C-methyl-D-erythritol kinase from Rhodopirellula baltica (strain DSM 10527 / NCIMB 13988 / SH1).